The following is a 498-amino-acid chain: MRINPTISGPGVSTLEEKNLGRVAQIIGPVLDVAFPPGKMPNIYNALVVKGRDTVGQQINVTCEVQQLLGNNRVRAVAMSATDGLTRGLEVIDTGAPLSVPVGGATLGRIFNVLGEPVDNLGPVDTRTTSPIHRSAPAFIQLDTKLSIFETGIKVVDLLAPYRRGGKIGLFGGAGVGKTVLIMELINNIAKAHGGVSVFGGVGERTREGNDLYMEMKESGVINEQNIAESKVALVYGQMNEPPGARMRVGLTALTMAEYFRDVNEQDVLLFIDNIFRFVQAGSEVSALLGRMPSAVGYQPTLSTEMGSLQERITSTKEGSITSIQAVYVPADDLTDPAPATTFAHLDATTVLSRGLAAKGIYPAVDPLDSTSTMLQPRIVGEEHYETAQRVKQTLQRYKELQDIIAILGLDELSEEDRLTVARARKIERFLSQPFFVAEVFTGSPGKYVGLAETIRGFQLILSGELDGLPEQAFYLVGNIDEATAKAMNLEVESKLKK.

Gly-172 to Thr-179 provides a ligand contact to ATP.

It belongs to the ATPase alpha/beta chains family. In terms of assembly, F-type ATPases have 2 components, CF(1) - the catalytic core - and CF(0) - the membrane proton channel. CF(1) has five subunits: alpha(3), beta(3), gamma(1), delta(1), epsilon(1). CF(0) has four main subunits: a(1), b(1), b'(1) and c(9-12).

The protein resides in the plastid. It localises to the chloroplast thylakoid membrane. The catalysed reaction is ATP + H2O + 4 H(+)(in) = ADP + phosphate + 5 H(+)(out). Functionally, produces ATP from ADP in the presence of a proton gradient across the membrane. The catalytic sites are hosted primarily by the beta subunits. The sequence is that of ATP synthase subunit beta, chloroplastic from Trochodendron aralioides (Wheel tree).